Consider the following 374-residue polypeptide: tRNA-specific 2-thiouridylase MnmA (374 aa).

ATP-binding positions include Gly17–Ser24 and Met43. Residues Asn103–Asp105 form an interaction with target base in tRNA region. Residue Cys108 is the Nucleophile of the active site. Cys108 and Cys204 are joined by a disulfide. Gly132 is a binding site for ATP. The segment at Lys154–Gln156 is interaction with tRNA. The active-site Cysteine persulfide intermediate is the Cys204. The interval Arg316–Tyr317 is interaction with tRNA.

Belongs to the MnmA/TRMU family.

The protein resides in the cytoplasm. The catalysed reaction is S-sulfanyl-L-cysteinyl-[protein] + uridine(34) in tRNA + AH2 + ATP = 2-thiouridine(34) in tRNA + L-cysteinyl-[protein] + A + AMP + diphosphate + H(+). Its function is as follows. Catalyzes the 2-thiolation of uridine at the wobble position (U34) of tRNA, leading to the formation of s(2)U34. This chain is tRNA-specific 2-thiouridylase MnmA, found in Pseudomonas entomophila (strain L48).